We begin with the raw amino-acid sequence, 280 residues long: Probable endonuclease 4 (280 aa).

Histidine 77, histidine 117, glutamate 148, aspartate 180, histidine 183, histidine 215, aspartate 228, histidine 230, and glutamate 259 together coordinate Zn(2+).

This sequence belongs to the AP endonuclease 2 family. The cofactor is Zn(2+).

It carries out the reaction Endonucleolytic cleavage to 5'-phosphooligonucleotide end-products.. Endonuclease IV plays a role in DNA repair. It cleaves phosphodiester bonds at apurinic or apyrimidinic (AP) sites, generating a 3'-hydroxyl group and a 5'-terminal sugar phosphate. The sequence is that of Probable endonuclease 4 from Thermoplasma volcanium (strain ATCC 51530 / DSM 4299 / JCM 9571 / NBRC 15438 / GSS1).